The sequence spans 1348 residues: ABC multidrug transporter atrD (1348 aa).

Residues 1-10 (MSPLETNPLS) show a composition bias toward polar residues. A disordered region spans residues 1–67 (MSPLETNPLS…HRPKSSSSNN (67 aa)). The segment covering 20-31 (ETSTTEEQASTP) has biased composition (low complexity). An N-linked (GlcNAc...) asparagine glycan is attached at Asn99. 4 helical membrane passes run 114–134 (ILIM…LPLF), 168–188 (YFVY…VGFI), 240–260 (KVGL…IAYV), and 268–288 (ICSS…QFII). One can recognise an ABC transmembrane type-1 1 domain in the interval 118–408 (VISTICAIAA…VSPNAQAFTN (291 aa)). N-linked (GlcNAc...) asparagine glycosylation is present at Asn314. Transmembrane regions (helical) follow at residues 344–364 (IVMG…YGLG) and 371–391 (FLVD…AILI). Residues 443-688 (IELRNVKHIY…GGAYRKLVEA (246 aa)) enclose the ABC transporter 1 domain. 478–485 (GPSGSGKS) lines the ATP pocket. Asn550 carries an N-linked (GlcNAc...) asparagine glycan. The next 2 helical transmembrane spans lie at 778 to 798 (MLIG…QAVL) and 825 to 845 (LMFF…GAAF). The ABC transmembrane type-1 2 domain maps to 779–1068 (LIGLVFSVLA…VFSFAPDMGK (290 aa)). N-linked (GlcNAc...) asparagine glycosylation occurs at Asn877. The next 4 helical transmembrane spans lie at 892–912 (HLSG…TTLG), 925–947 (LALV…FYML), 1015–1035 (ALVF…LGHH), and 1042–1062 (FFVC…VFSF). Residue Asn1088 is glycosylated (N-linked (GlcNAc...) asparagine). One can recognise an ABC transporter 2 domain in the interval 1103–1341 (IEFRNVHFRY…KGRYYELVNL (239 aa)). 1138–1145 (GPSGCGKS) is an ATP binding site.

This sequence belongs to the ABC transporter superfamily. ABCB family. Multidrug resistance exporter (TC 3.A.1.201) subfamily.

The protein resides in the cell membrane. Fenamirol efflux transporter activity is inhibited by the cyclosporin derivative PSC 833, nigericin, reserpine and valinomycin. The effect of reserpine is transiant, while that of the cyclosporin derivative PSC 833, nigericin and valinomycin is proportional to the time of exposure. Cyclohexinmide has inhibitory effect only when applied prior to addition of the fungicide. In terms of biological role, pleiotropic ABC efflux transporter involved in the protection of the cells against a wide range of toxic compounds. Confers resistance to the azole fenarimol via efflux transport. May also be involved in the secretion of penicillin. This Emericella nidulans (Aspergillus nidulans) protein is ABC multidrug transporter atrD.